Consider the following 2243-residue polypeptide: Zinc finger FYVE domain-containing protein 26 homolog (2243 aa).

2 disordered regions span residues 386–416 (SQRKGEDGENDEEDDEQYVDDDVASPPRPTA) and 514–556 (KKKA…GKAS). Acidic residues predominate over residues 393–408 (GENDEEDDEQYVDDDV). At Y403 the chain carries Phosphotyrosine. Basic and acidic residues predominate over residues 517–528 (ASSDDESRERSN). Positions 534-543 (NRRKARRQRR) are enriched in basic residues. An LRR 1 repeat occupies 617–644 (KKIIETFHLEHSQLNRELHFMEQQQLVK). Position 1424 is a phosphoserine (S1424). An FYVE-type zinc finger spans residues 1444-1500 (DEEASHCMCCRRAAFTMLMRRHHCRRCGRVVCYACSTHRIRIPELYDELEVRICNDC). Zn(2+) contacts are provided by C1450, C1453, C1467, C1470, C1475, C1478, C1497, and C1500. The tract at residues 1505–1534 (TPAKDQGDGTSSERSAISGQVSKSSGRSDS) is disordered. Positions 1512-1534 (DGTSSERSAISGQVSKSSGRSDS) are enriched in polar residues. An LRR 2 repeat occupies 1887–1912 (YPQLANGGLNVLMDELQQLDDAQFTA).

It belongs to the ZFYVE26 family.

Its function is as follows. Phosphatidylinositol 3-phosphate (PtdIns[3]P)-binding protein. Involved in autophagy. The sequence is that of Zinc finger FYVE domain-containing protein 26 homolog from Drosophila melanogaster (Fruit fly).